Consider the following 257-residue polypeptide: 3-deoxy-manno-octulosonate cytidylyltransferase (257 aa).

This sequence belongs to the KdsB family.

It is found in the cytoplasm. It catalyses the reaction 3-deoxy-alpha-D-manno-oct-2-ulosonate + CTP = CMP-3-deoxy-beta-D-manno-octulosonate + diphosphate. It functions in the pathway nucleotide-sugar biosynthesis; CMP-3-deoxy-D-manno-octulosonate biosynthesis; CMP-3-deoxy-D-manno-octulosonate from 3-deoxy-D-manno-octulosonate and CTP: step 1/1. It participates in bacterial outer membrane biogenesis; lipopolysaccharide biosynthesis. Activates KDO (a required 8-carbon sugar) for incorporation into bacterial lipopolysaccharide in Gram-negative bacteria. This is 3-deoxy-manno-octulosonate cytidylyltransferase from Methylococcus capsulatus (strain ATCC 33009 / NCIMB 11132 / Bath).